The primary structure comprises 102 residues: Small ribosomal subunit protein uS10 (102 aa).

This sequence belongs to the universal ribosomal protein uS10 family. In terms of assembly, part of the 30S ribosomal subunit.

Functionally, involved in the binding of tRNA to the ribosomes. This chain is Small ribosomal subunit protein uS10, found in Lactococcus lactis subsp. lactis (strain IL1403) (Streptococcus lactis).